Reading from the N-terminus, the 237-residue chain is Orotate phosphoribosyltransferase (237 aa).

K29 provides a ligand contact to 5-phospho-alpha-D-ribose 1-diphosphate. 37–38 contacts orotate; that stretch reads FF. 5-phospho-alpha-D-ribose 1-diphosphate is bound by residues 79–80, R105, K106, K109, H111, and 130–138; these read YK and DDVMSAGTA. Orotate is bound by residues S134 and R162.

The protein belongs to the purine/pyrimidine phosphoribosyltransferase family. PyrE subfamily. In terms of assembly, homodimer. Requires Mg(2+) as cofactor.

It carries out the reaction orotidine 5'-phosphate + diphosphate = orotate + 5-phospho-alpha-D-ribose 1-diphosphate. It participates in pyrimidine metabolism; UMP biosynthesis via de novo pathway; UMP from orotate: step 1/2. Catalyzes the transfer of a ribosyl phosphate group from 5-phosphoribose 1-diphosphate to orotate, leading to the formation of orotidine monophosphate (OMP). The polypeptide is Orotate phosphoribosyltransferase (Polaromonas naphthalenivorans (strain CJ2)).